A 431-amino-acid polypeptide reads, in one-letter code: PHD finger-containing protein 1 (431 aa).

Residues 7-59 form a PHD-type zinc finger; the sequence is GPVCQTCGDIGFEEALVFCDSCMFESIHRYCLGITPIPFTEYITWICEDCDNS. Residues Cys-10, Cys-13, Cys-25, Cys-28, His-34, Cys-37, Cys-53, and Cys-56 each contribute to the Zn(2+) site. A disordered region spans residues 125-221; the sequence is EAADSSSVPD…QESSDSRKPH (97 aa). Over residues 128–139 the composition is skewed to polar residues; the sequence is DSSSVPDHSSCT. Basic residues predominate over residues 160-171; sequence KKKKKKKKKKSI. Residues 191 to 202 are compositionally biased toward low complexity; sequence VVEPVEVSSSSP. Basic and acidic residues predominate over residues 205 to 221; that stretch reads ETMESKRQESSDSRKPH.

Interacts directly with AIPP3/BDT1.

Together with AIPP3/BDT1, cooperates to form a BAH-PHD bivalent histone reader complex able to read histone H3 lysine 27 trimethylation (H3K27me3) histone marks in order to regulate transcription, especially to prevent early flowering; promotes AIPP3/BDT1 binding to H3K27me3. This chain is PHD finger-containing protein 1, found in Arabidopsis thaliana (Mouse-ear cress).